Reading from the N-terminus, the 452-residue chain is tRNA-2-methylthio-N(6)-dimethylallyladenosine synthase (452 aa).

Residues 16–134 form the MTTase N-terminal domain; that stretch reads KRFFISTWGC…LPEYIERVKT (119 aa). The [4Fe-4S] cluster site is built by Cys25, Cys61, Cys95, Cys171, Cys175, and Cys178. A Radical SAM core domain is found at 157-387; the sequence is RKSDIKAFVT…VEAVNEIMAR (231 aa). The TRAM domain maps to 390-452; sequence KEFEGKTVEV…NSFSLTGEII (63 aa).

This sequence belongs to the methylthiotransferase family. MiaB subfamily. As to quaternary structure, monomer. [4Fe-4S] cluster is required as a cofactor.

It is found in the cytoplasm. The catalysed reaction is N(6)-dimethylallyladenosine(37) in tRNA + (sulfur carrier)-SH + AH2 + 2 S-adenosyl-L-methionine = 2-methylsulfanyl-N(6)-dimethylallyladenosine(37) in tRNA + (sulfur carrier)-H + 5'-deoxyadenosine + L-methionine + A + S-adenosyl-L-homocysteine + 2 H(+). In terms of biological role, catalyzes the methylthiolation of N6-(dimethylallyl)adenosine (i(6)A), leading to the formation of 2-methylthio-N6-(dimethylallyl)adenosine (ms(2)i(6)A) at position 37 in tRNAs that read codons beginning with uridine. This Clostridium novyi (strain NT) protein is tRNA-2-methylthio-N(6)-dimethylallyladenosine synthase.